Here is a 473-residue protein sequence, read N- to C-terminus: MSFPLIFERSRKGRRGLKLVKAVPKAEDLIPKEHLREVPPRLPEVDELTLVRHYTGLSRRQVGVDTTFYPLGSCTMKYNPKLHEEAARLFADLHPYQDPRTAQGALRLMWELGEYLKALTGMDAITLEPAAGAHGELTGILIIRAYHEDRGEGRTRRVVLVPDSAHGSNPATASMAGYQVREIPSGPEGEVDLEALKRELGPHVAALMLTNPNTLGLFERRILEISRLCKEAGVQLYYDGANLNAIMGWARPGDMGFDVVHLNLHKTFTVPHGGGGPGSGPVGVKAHLAPYLPVPLVERGEEGFYLDFDRPKSIGRVRSFYGNFLALVRAWAYIRTLGLEGLKKAAALAVLNARYLKELLKEKGYRVPYDGPSMHEFVAQPPQGFRALDLAKGLLELGFHPPTVYFPLIVKEALMVEPTETEAKETLEAFAEAMGALLKKPKEWLENAPYSTPVRRLDELRANRSPKLTYFDE.

Position 266 is an N6-(pyridoxal phosphate)lysine (K266).

This sequence belongs to the GcvP family. C-terminal subunit subfamily. As to quaternary structure, the glycine cleavage system is composed of four proteins: P, T, L and H. In this organism, the P 'protein' is a heterodimer of two subunits. Pyridoxal 5'-phosphate is required as a cofactor.

It carries out the reaction N(6)-[(R)-lipoyl]-L-lysyl-[glycine-cleavage complex H protein] + glycine + H(+) = N(6)-[(R)-S(8)-aminomethyldihydrolipoyl]-L-lysyl-[glycine-cleavage complex H protein] + CO2. The glycine cleavage system catalyzes the degradation of glycine. The P protein binds the alpha-amino group of glycine through its pyridoxal phosphate cofactor; CO(2) is released and the remaining methylamine moiety is then transferred to the lipoamide cofactor of the H protein. In Thermus thermophilus (strain ATCC BAA-163 / DSM 7039 / HB27), this protein is Probable glycine dehydrogenase (decarboxylating) subunit 2.